We begin with the raw amino-acid sequence, 85 residues long: uncharacterized protein (85 aa).

This is an uncharacterized protein from Escherichia coli (strain K12).